We begin with the raw amino-acid sequence, 29 residues long: Cyclotide mech-7 (29 aa).

The segment at residues 1-29 is a cross-link (cyclopeptide (Gly-Asp)); it reads GIPICGETCTIGTCNTPGCTCSWPVCTRD. 3 disulfides stabilise this stretch: C5–C19, C9–C21, and C14–C26.

Post-translationally, this is a cyclic peptide. In terms of processing, contains 3 disulfide bonds.

In terms of biological role, probably participates in a plant defense mechanism (Potential). Binds to and induces leakage in phospholipd membranes, particularly ones containing 1-palmitoyl-2-oleophosphatidylethanolamine (POPE). This is Cyclotide mech-7 from Melicytus chathamicus (Chatham Island mahoe).